The primary structure comprises 187 residues: MTTAQKVQPRLKERYRSEIRDALRKQFGYGNVMQIPTVTKVVVNMGVGEAARDAKLINGAVNDLALITGQKPEVRRARKSIAQFKLREGMPVGVRVTLRGDRMWEFLDRLTSIALPRIRDFRGLSPKQFDGVGSYTFGLAEQAVFHEVDVDKIDRVRGMDINVVTSAATDDEGRALLRALGFPFKEN.

This sequence belongs to the universal ribosomal protein uL5 family. Part of the 50S ribosomal subunit; part of the 5S rRNA/L5/L18/L25 subcomplex. Contacts the 5S rRNA and the P site tRNA. Forms a bridge to the 30S subunit in the 70S ribosome.

This is one of the proteins that bind and probably mediate the attachment of the 5S RNA into the large ribosomal subunit, where it forms part of the central protuberance. In the 70S ribosome it contacts protein S13 of the 30S subunit (bridge B1b), connecting the 2 subunits; this bridge is implicated in subunit movement. Contacts the P site tRNA; the 5S rRNA and some of its associated proteins might help stabilize positioning of ribosome-bound tRNAs. In Mycobacterium bovis (strain BCG / Tokyo 172 / ATCC 35737 / TMC 1019), this protein is Large ribosomal subunit protein uL5.